The sequence spans 129 residues: Glycine cleavage system H protein (129 aa).

The Lipoyl-binding domain occupies 23–104; that stretch reads SVTVGITHHA…AYTAWLFKIK (82 aa). The residue at position 64 (Lys-64) is an N6-lipoyllysine.

This sequence belongs to the GcvH family. In terms of assembly, the glycine cleavage system is composed of four proteins: P, T, L and H. Requires (R)-lipoate as cofactor.

Functionally, the glycine cleavage system catalyzes the degradation of glycine. The H protein shuttles the methylamine group of glycine from the P protein to the T protein. The chain is Glycine cleavage system H protein from Thiobacillus denitrificans (strain ATCC 25259 / T1).